The sequence spans 353 residues: RNA 3'-terminal phosphate cyclase (353 aa).

ATP-binding positions include glutamine 100 and 285-289 (HAADQ). Histidine 311 serves as the catalytic Tele-AMP-histidine intermediate.

It belongs to the RNA 3'-terminal cyclase family. Type 1 subfamily.

It localises to the cytoplasm. The enzyme catalyses a 3'-end 3'-phospho-ribonucleotide-RNA + ATP = a 3'-end 2',3'-cyclophospho-ribonucleotide-RNA + AMP + diphosphate. Its function is as follows. Catalyzes the conversion of 3'-phosphate to a 2',3'-cyclic phosphodiester at the end of RNA. The mechanism of action of the enzyme occurs in 3 steps: (A) adenylation of the enzyme by ATP; (B) transfer of adenylate to an RNA-N3'P to produce RNA-N3'PP5'A; (C) and attack of the adjacent 2'-hydroxyl on the 3'-phosphorus in the diester linkage to produce the cyclic end product. The biological role of this enzyme is unknown but it is likely to function in some aspects of cellular RNA processing. The protein is RNA 3'-terminal phosphate cyclase of Nitrosospira multiformis (strain ATCC 25196 / NCIMB 11849 / C 71).